An 87-amino-acid polypeptide reads, in one-letter code: Citrate lyase acyl carrier protein (87 aa).

S14 carries the post-translational modification O-(phosphoribosyl dephospho-coenzyme A)serine.

This sequence belongs to the CitD family. As to quaternary structure, oligomer with a subunit composition of (alpha,beta,gamma)6.

The protein localises to the cytoplasm. Its function is as follows. Covalent carrier of the coenzyme of citrate lyase. This chain is Citrate lyase acyl carrier protein, found in Treponema denticola (strain ATCC 35405 / DSM 14222 / CIP 103919 / JCM 8153 / KCTC 15104).